A 321-amino-acid polypeptide reads, in one-letter code: Ribosomal RNA small subunit methyltransferase H (321 aa).

S-adenosyl-L-methionine is bound by residues 40-42 (GGH), D60, F84, D106, and Q113.

This sequence belongs to the methyltransferase superfamily. RsmH family.

It localises to the cytoplasm. The enzyme catalyses cytidine(1402) in 16S rRNA + S-adenosyl-L-methionine = N(4)-methylcytidine(1402) in 16S rRNA + S-adenosyl-L-homocysteine + H(+). Specifically methylates the N4 position of cytidine in position 1402 (C1402) of 16S rRNA. This Pasteurella multocida (strain Pm70) protein is Ribosomal RNA small subunit methyltransferase H.